A 254-amino-acid polypeptide reads, in one-letter code: Ribosomal RNA small subunit methyltransferase J (254 aa).

S-adenosyl-L-methionine is bound by residues 107–108 (RD), 123–124 (ER), and aspartate 177.

This sequence belongs to the methyltransferase superfamily. RsmJ family.

The protein resides in the cytoplasm. The enzyme catalyses guanosine(1516) in 16S rRNA + S-adenosyl-L-methionine = N(2)-methylguanosine(1516) in 16S rRNA + S-adenosyl-L-homocysteine + H(+). In terms of biological role, specifically methylates the guanosine in position 1516 of 16S rRNA. The chain is Ribosomal RNA small subunit methyltransferase J from Histophilus somni (strain 129Pt) (Haemophilus somnus).